The sequence spans 267 residues: Hydroxyethylthiazole kinase (267 aa).

Met-48 is a binding site for substrate. Positions 124 and 170 each coordinate ATP. Position 197 (Gly-197) interacts with substrate.

Belongs to the Thz kinase family. It depends on Mg(2+) as a cofactor.

It carries out the reaction 5-(2-hydroxyethyl)-4-methylthiazole + ATP = 4-methyl-5-(2-phosphooxyethyl)-thiazole + ADP + H(+). It participates in cofactor biosynthesis; thiamine diphosphate biosynthesis; 4-methyl-5-(2-phosphoethyl)-thiazole from 5-(2-hydroxyethyl)-4-methylthiazole: step 1/1. Catalyzes the phosphorylation of the hydroxyl group of 4-methyl-5-beta-hydroxyethylthiazole (THZ). The sequence is that of Hydroxyethylthiazole kinase from Aliivibrio fischeri (strain ATCC 700601 / ES114) (Vibrio fischeri).